A 255-amino-acid polypeptide reads, in one-letter code: Small ribosomal subunit protein eS1 (255 aa).

Alanine 2 carries the post-translational modification N-acetylalanine; partial.

This sequence belongs to the eukaryotic ribosomal protein eS1 family. Component of the small ribosomal subunit. Mature ribosomes consist of a small (40S) and a large (60S) subunit. The 40S subunit contains about 33 different proteins and 1 molecule of RNA (18S). The 60S subunit contains about 49 different proteins and 3 molecules of RNA (25S, 5.8S and 5S).

It localises to the cytoplasm. The polypeptide is Small ribosomal subunit protein eS1 (Candida glabrata (strain ATCC 2001 / BCRC 20586 / JCM 3761 / NBRC 0622 / NRRL Y-65 / CBS 138) (Yeast)).